A 147-amino-acid polypeptide reads, in one-letter code: Large ribosomal subunit protein uL13 (147 aa).

Residues 127–147 form a disordered region; that stretch reads GPEHPHSAQQPKVLEIQGAAR.

Belongs to the universal ribosomal protein uL13 family. In terms of assembly, part of the 50S ribosomal subunit.

Its function is as follows. This protein is one of the early assembly proteins of the 50S ribosomal subunit, although it is not seen to bind rRNA by itself. It is important during the early stages of 50S assembly. This Verminephrobacter eiseniae (strain EF01-2) protein is Large ribosomal subunit protein uL13.